We begin with the raw amino-acid sequence, 686 residues long: Acyl-CoA synthetase short-chain family member 3, mitochondrial (686 aa).

Residues 1 to 29 (MKPSWLQCHKVTSAGGLGGPLPGSSPARG) constitute a mitochondrion transit peptide. 227 to 230 (EPGR) serves as a coordination point for CoA. ATP-binding positions include 425–427 (GER) and 446–451 (DHWWQT). Lysine 518 carries the N6-succinyllysine modification. Lysine 524 bears the N6-acetyllysine mark. ATP is bound by residues aspartate 539, arginine 554, and arginine 565. A CoA-binding site is contributed by arginine 624.

The protein belongs to the ATP-dependent AMP-binding enzyme family.

It is found in the mitochondrion matrix. The catalysed reaction is acetate + ATP + CoA = acetyl-CoA + AMP + diphosphate. It carries out the reaction propanoate + ATP + CoA = propanoyl-CoA + AMP + diphosphate. It catalyses the reaction butanoate + ATP + CoA = butanoyl-CoA + AMP + diphosphate. In terms of biological role, catalyzes the synthesis of acetyl-CoA from short-chain fatty acids. Propionate is the preferred substrate but can also utilize acetate and butyrate with a much lower affinity. The chain is Acyl-CoA synthetase short-chain family member 3, mitochondrial (ACSS3) from Pongo abelii (Sumatran orangutan).